We begin with the raw amino-acid sequence, 230 residues long: Sugar fermentation stimulation protein homolog (230 aa).

Belongs to the SfsA family.

This is Sugar fermentation stimulation protein homolog from Caldivirga maquilingensis (strain ATCC 700844 / DSM 13496 / JCM 10307 / IC-167).